The following is a 698-amino-acid chain: Elongation factor G (698 aa).

Residues 8–284 (ANVRNIGIMA…AVVDYLPSPL (277 aa)) enclose the tr-type G domain. GTP-binding positions include 17–24 (AHIDAGKT), 81–85 (DTPGH), and 135–138 (NKLD).

It belongs to the TRAFAC class translation factor GTPase superfamily. Classic translation factor GTPase family. EF-G/EF-2 subfamily.

The protein resides in the cytoplasm. In terms of biological role, catalyzes the GTP-dependent ribosomal translocation step during translation elongation. During this step, the ribosome changes from the pre-translocational (PRE) to the post-translocational (POST) state as the newly formed A-site-bound peptidyl-tRNA and P-site-bound deacylated tRNA move to the P and E sites, respectively. Catalyzes the coordinated movement of the two tRNA molecules, the mRNA and conformational changes in the ribosome. The polypeptide is Elongation factor G (Salinispora tropica (strain ATCC BAA-916 / DSM 44818 / JCM 13857 / NBRC 105044 / CNB-440)).